We begin with the raw amino-acid sequence, 578 residues long: Raftlin (578 aa).

G2 is lipidated: N-myristoyl glycine. C3 carries S-palmitoyl cysteine lipidation. Residues 169 to 184 (VNSAGSSAPVSTANST) show a composition bias toward polar residues. Disordered stretches follow at residues 169-271 (VNSA…VHEE), 449-525 (FSRE…PGGL), and 551-578 (CTGH…VEEN). 3 positions are modified to phosphoserine: S183, S199, and S220. The segment covering 185 to 206 (EDARDAKNARGDHASLENEKPG) has biased composition (basic and acidic residues). Over residues 457–466 (RQMRKSKGKL) the composition is skewed to basic residues. Basic and acidic residues predominate over residues 467 to 485 (SARDKQQAEENEKNLEDQS). Phosphoserine is present on S505. Basic and acidic residues-rich tracts occupy residues 506 to 518 (EEMK…DKGE) and 557 to 578 (PGED…VEEN).

The protein belongs to the raftlin family. Interacts with TLR4; the interaction occurs in response to lipopolysaccharide stimulation. Interacts with CLTC; the interaction occurs in response to pathogens. Interacts with AP2A1 and AP2B1. In terms of tissue distribution, expressed in B-cells (at protein level). Expressed in dendritic cells and macrophages.

The protein resides in the cell membrane. It is found in the cytoplasm. Its subcellular location is the membrane raft. It localises to the endosome. The protein localises to the early endosome. In terms of biological role, involved in protein trafficking via association with clathrin and AP2 complex. Upon bacterial lipopolysaccharide stimulation, mediates internalization of TLR4 to endosomes in dendritic cells and macrophages; and internalization of poly(I:C) to TLR3-positive endosomes in myeloid dendritic cells and epithelial cells; resulting in activation of TICAM1-mediated signaling and subsequent IFNB1 production. Involved in T-cell antigen receptor-mediated signaling by regulating tyrosine kinase LCK localization, T-cell dependent antibody production and cytokine secretion. May regulate B-cell antigen receptor-mediated signaling. May play a pivotal role in the formation and/or maintenance of lipid rafts. This Homo sapiens (Human) protein is Raftlin (RFTN1).